Consider the following 297-residue polypeptide: ATP synthase subunit a (297 aa).

Transmembrane regions (helical) follow at residues 38-58, 77-97, 107-127, 133-153, 174-194, 202-222, 230-250, and 252-272; these read PLIP…IAIL, GYVL…VDLL, LFII…VGGI, SSTV…IMGV, TIPL…LLSI, VLAG…FFTL, VGLV…HVYF, and ILVS…YWSQ.

The protein belongs to the ATPase A chain family. In terms of assembly, F-type ATPases have 2 components, CF(1) - the catalytic core - and CF(0) - the membrane proton channel. CF(1) has five subunits: alpha(3), beta(3), gamma(1), delta(1), epsilon(1). CF(0) has three main subunits: a(1), b(2) and c(9-12). The alpha and beta chains form an alternating ring which encloses part of the gamma chain. CF(1) is attached to CF(0) by a central stalk formed by the gamma and epsilon chains, while a peripheral stalk is formed by the delta and b chains.

The protein localises to the cell membrane. In terms of biological role, key component of the proton channel; it plays a direct role in the translocation of protons across the membrane. The chain is ATP synthase subunit a from Mycoplasmoides gallisepticum (strain R(low / passage 15 / clone 2)) (Mycoplasma gallisepticum).